We begin with the raw amino-acid sequence, 418 residues long: Gamma-glutamyl phosphate reductase (418 aa).

The protein belongs to the gamma-glutamyl phosphate reductase family.

It is found in the cytoplasm. It catalyses the reaction L-glutamate 5-semialdehyde + phosphate + NADP(+) = L-glutamyl 5-phosphate + NADPH + H(+). It participates in amino-acid biosynthesis; L-proline biosynthesis; L-glutamate 5-semialdehyde from L-glutamate: step 2/2. In terms of biological role, catalyzes the NADPH-dependent reduction of L-glutamate 5-phosphate into L-glutamate 5-semialdehyde and phosphate. The product spontaneously undergoes cyclization to form 1-pyrroline-5-carboxylate. This is Gamma-glutamyl phosphate reductase from Colwellia psychrerythraea (strain 34H / ATCC BAA-681) (Vibrio psychroerythus).